The following is a 256-amino-acid chain: Putative adhesin P1-like protein MPN_132 (256 aa).

The span at 56–72 (AVSESQAATSSTTTTAT) shows a compositional bias: low complexity. Disordered regions lie at residues 56–115 (AVSE…PYLH) and 149–235 (FGTD…EVVG). A compositionally biased stretch (polar residues) spans 96 to 112 (KASTQGSGQTNSQNTSP). Low complexity-rich tracts occupy residues 155–179 (TQPQ…LGSV) and 211–222 (STSDGNTSSTNN).

Belongs to the adhesin P1 family.

This Mycoplasma pneumoniae (strain ATCC 29342 / M129 / Subtype 1) (Mycoplasmoides pneumoniae) protein is Putative adhesin P1-like protein MPN_132.